A 417-amino-acid polypeptide reads, in one-letter code: MSENLIIFNARIVTPTGTSARKGAEMGQLRIIENGTVEVTKGIITYVGESRGEDRDGYYQHYWHYNARGHCLLPGFVDSHTHFVFGGERSEEFSWRLKGESYMSIMERGGGIASTVKATRQMNFLKLRSAAEGFLKKMSAMGVTTVEGKSGYGLDRETELLQLKIMRSLNNDEHKRIDIVSTFLGAHALPEEYKGRGDEYIDFLIREMLPVIRENELAECCDVFCEQGVFSVEQSRRLLQAAKEQGFLLKLHADEIVSFGGAELAAELGALSADHLLQASDAGIRAMADAGVVATLLPLTAFALKEPYARGREMIDAGCAVALATDLNPGSCFSGSIPLTIALACIYMKLSIEETITALTLNGAAALHRADRIGSIEVGKQGDFVILNSDNYHILPYYVGMNCVIMTIKGGMLYPVN.

The Fe(3+) site is built by histidine 80 and histidine 82. Zn(2+) contacts are provided by histidine 80 and histidine 82. 4-imidazolone-5-propanoate-binding residues include arginine 89, tyrosine 152, and histidine 187. Tyrosine 152 provides a ligand contact to N-formimidoyl-L-glutamate. Histidine 252 contacts Fe(3+). Histidine 252 provides a ligand contact to Zn(2+). Glutamate 255 contacts 4-imidazolone-5-propanoate. A Fe(3+)-binding site is contributed by aspartate 326. Residue aspartate 326 coordinates Zn(2+). 2 residues coordinate N-formimidoyl-L-glutamate: asparagine 328 and glycine 330. Serine 331 provides a ligand contact to 4-imidazolone-5-propanoate.

This sequence belongs to the metallo-dependent hydrolases superfamily. HutI family. Requires Zn(2+) as cofactor. Fe(3+) serves as cofactor.

It is found in the cytoplasm. The enzyme catalyses 4-imidazolone-5-propanoate + H2O = N-formimidoyl-L-glutamate. Its pathway is amino-acid degradation; L-histidine degradation into L-glutamate; N-formimidoyl-L-glutamate from L-histidine: step 3/3. Its function is as follows. Catalyzes the hydrolytic cleavage of the carbon-nitrogen bond in imidazolone-5-propanoate to yield N-formimidoyl-L-glutamate. It is the third step in the universal histidine degradation pathway. This is Imidazolonepropionase from Bacteroides thetaiotaomicron (strain ATCC 29148 / DSM 2079 / JCM 5827 / CCUG 10774 / NCTC 10582 / VPI-5482 / E50).